A 143-amino-acid chain; its full sequence is Large ribosomal subunit protein uL13 (143 aa).

It belongs to the universal ribosomal protein uL13 family. In terms of assembly, part of the 50S ribosomal subunit.

Functionally, this protein is one of the early assembly proteins of the 50S ribosomal subunit, although it is not seen to bind rRNA by itself. It is important during the early stages of 50S assembly. This chain is Large ribosomal subunit protein uL13, found in Geobacter sulfurreducens (strain ATCC 51573 / DSM 12127 / PCA).